The sequence spans 2507 residues: Putative neurobeachin homolog (2507 aa).

3 disordered regions span residues Met-1–Pro-109, Pro-1307–Arg-1377, and Ser-1629–Glu-1649. Residues Pro-24–Asn-37 are compositionally biased toward acidic residues. The segment covering Thr-1317–Lys-1340 has biased composition (polar residues). Over residues Asp-1360–Gly-1372 the composition is skewed to acidic residues. Residues Pro-1690–Pro-1798 enclose the BEACH-type PH domain. Positions Met-1817–Arg-2106 constitute a BEACH domain. WD repeat units follow at residues Gly-2265–Ala-2308, Gly-2326–Ile-2365, Leu-2405–Thr-2444, and Pro-2447–Glu-2486.

This sequence belongs to the WD repeat neurobeachin family. As to quaternary structure, interacts with RII subunit of PKA. As to expression, expressed in vulval precursor cells and rectal epithelia in L2 and L3 larvae. In L4 larvae, expression is seen in intestinal epithelial cells.

It is found in the cytoplasm. It localises to the membrane. Its subcellular location is the nucleus. Functionally, binds to type II regulatory subunits of protein kinase A and anchors/targets them to the membrane. May anchor the kinase to cytoskeletal and/or organelle-associated proteins. Regulates endosomal traffic in polarized epithelial cells such as the vulval precursor cells and intestinal cells. Thought to act as a negative regulator of lin-12 activity in vulval precursor cells. May have a role in the internalization process from basolateral surface of polarized epithelial cells. The chain is Putative neurobeachin homolog (sel-2) from Caenorhabditis elegans.